Consider the following 576-residue polypeptide: Proline--tRNA ligase (576 aa).

This sequence belongs to the class-II aminoacyl-tRNA synthetase family. ProS type 1 subfamily. In terms of assembly, homodimer.

Its subcellular location is the cytoplasm. It carries out the reaction tRNA(Pro) + L-proline + ATP = L-prolyl-tRNA(Pro) + AMP + diphosphate. In terms of biological role, catalyzes the attachment of proline to tRNA(Pro) in a two-step reaction: proline is first activated by ATP to form Pro-AMP and then transferred to the acceptor end of tRNA(Pro). As ProRS can inadvertently accommodate and process non-cognate amino acids such as alanine and cysteine, to avoid such errors it has two additional distinct editing activities against alanine. One activity is designated as 'pretransfer' editing and involves the tRNA(Pro)-independent hydrolysis of activated Ala-AMP. The other activity is designated 'posttransfer' editing and involves deacylation of mischarged Ala-tRNA(Pro). The misacylated Cys-tRNA(Pro) is not edited by ProRS. The chain is Proline--tRNA ligase from Psychrobacter sp. (strain PRwf-1).